We begin with the raw amino-acid sequence, 610 residues long: Butyryl-CoA dehydrogenase Swol_2052 (610 aa).

The active-site Proton acceptor is Glu451.

The protein belongs to the acyl-CoA dehydrogenase family. The cofactor is FAD.

The protein localises to the cytoplasm. It carries out the reaction butanoyl-CoA + oxidized [electron-transfer flavoprotein] + H(+) = (2E)-butenoyl-CoA + reduced [electron-transfer flavoprotein]. The enzyme catalyses a short-chain 2,3-saturated fatty acyl-CoA + oxidized [electron-transfer flavoprotein] + H(+) = a short-chain (2E)-enoyl-CoA + reduced [electron-transfer flavoprotein]. The protein operates within lipid metabolism; butanoate metabolism. Functionally, involved in syntrophic growth of S.wolfei with butyrate, as part of the butyrate oxidation pathway. Catalyzes the oxidation of butanoyl-CoA to crotonyl-CoA. Probably passes the electrons released by this reaction on to electron-transfer flavoproteins (EtfAB) to finally generate hydrogen and/or formate. This Syntrophomonas wolfei subsp. wolfei (strain DSM 2245B / Goettingen) protein is Butyryl-CoA dehydrogenase Swol_2052.